The chain runs to 513 residues: Bifunctional pantoate ligase/cytidylate kinase (513 aa).

A pantoate--beta-alanine ligase region spans residues 1 to 283 (MVQVFRTIAG…VGSTRLIDNL (283 aa)). An ATP-binding site is contributed by 30 to 37 (MGSLHAGH). The active-site Proton donor is His-37. Residue Gln-61 participates in (R)-pantoate binding. Gln-61 lines the beta-alanine pocket. An ATP-binding site is contributed by 150 to 153 (GAKD). Gln-156 is a binding site for (R)-pantoate. Residues Val-179 and 187–190 (MSSR) each bind ATP. The interval 284–513 (VLNHRLPIIA…IELYKKYNKG (230 aa)) is cytidylate kinase.

This sequence in the N-terminal section; belongs to the pantothenate synthetase family. The protein in the C-terminal section; belongs to the cytidylate kinase family. Type 1 subfamily.

It is found in the cytoplasm. It catalyses the reaction (R)-pantoate + beta-alanine + ATP = (R)-pantothenate + AMP + diphosphate + H(+). The enzyme catalyses CMP + ATP = CDP + ADP. The catalysed reaction is dCMP + ATP = dCDP + ADP. It functions in the pathway cofactor biosynthesis; (R)-pantothenate biosynthesis; (R)-pantothenate from (R)-pantoate and beta-alanine: step 1/1. Its function is as follows. Catalyzes the condensation of pantoate with beta-alanine in an ATP-dependent reaction via a pantoyl-adenylate intermediate. Catalyzes the transfer of a phosphate group from ATP to either CMP or dCMP to form CDP or dCDP and ADP, respectively. The polypeptide is Bifunctional pantoate ligase/cytidylate kinase (Synechocystis sp. (strain ATCC 27184 / PCC 6803 / Kazusa)).